Consider the following 200-residue polypeptide: Probable molybdenum cofactor guanylyltransferase (200 aa).

GTP is bound by residues 9 to 11, K21, D69, and D100; that span reads LAG. D100 contributes to the Mg(2+) binding site.

This sequence belongs to the MobA family. Requires Mg(2+) as cofactor.

It is found in the cytoplasm. It carries out the reaction Mo-molybdopterin + GTP + H(+) = Mo-molybdopterin guanine dinucleotide + diphosphate. Its function is as follows. Transfers a GMP moiety from GTP to Mo-molybdopterin (Mo-MPT) cofactor (Moco or molybdenum cofactor) to form Mo-molybdopterin guanine dinucleotide (Mo-MGD) cofactor. This is Probable molybdenum cofactor guanylyltransferase from Bacillus thuringiensis (strain Al Hakam).